Reading from the N-terminus, the 178-residue chain is Hypoxanthine phosphoribosyltransferase (178 aa).

The diphosphate site is built by R43 and G44. A GMP-binding site is contributed by E99. Position 99 (E99) interacts with IMP. Mg(2+)-binding residues include E99 and D100. The active-site Proton acceptor is the D103. GMP contacts are provided by residues 103–108 (DSGNTL), K131, and D159. Residues 103 to 108 (DSGNTL) and K131 contribute to the IMP site. R165 is a binding site for diphosphate.

This sequence belongs to the purine/pyrimidine phosphoribosyltransferase family. Homotetramer. Mg(2+) serves as cofactor.

The protein resides in the cytoplasm. The enzyme catalyses IMP + diphosphate = hypoxanthine + 5-phospho-alpha-D-ribose 1-diphosphate. It catalyses the reaction GMP + diphosphate = guanine + 5-phospho-alpha-D-ribose 1-diphosphate. It participates in purine metabolism; IMP biosynthesis via salvage pathway; IMP from hypoxanthine: step 1/1. In terms of biological role, purine salvage pathway enzyme which catalyzes the transfer of the ribosyl-5-phosphate group from 5-phospho-alpha-D-ribose 1-diphosphate (PRPP) to the N9 position of hypoxanthine to yield IMP (inosine 5'-monophosphate). To a lesser extent, can also act on guanine leading to GMP, but shows a highly less efficient activity with xanthine. This Shigella flexneri protein is Hypoxanthine phosphoribosyltransferase (hpt).